The primary structure comprises 1023 residues: Peroxisome proliferator-activated receptor gamma coactivator 1-beta (1023 aa).

Positions 1 to 91 (MAGNDCGALL…LFQIDSENEA (91 aa)) are abolishes DNA transcriptional activity when missing. The disordered stretch occupies residues 122–148 (LSCTSASPAPSSAPPSPAPEKPSAPAP). A compositionally biased stretch (pro residues) spans 132–146 (SSAPPSPAPEKPSAP). The short motif at 156–160 (LQKLL) is the LXXLL motif 1 element. 3 disordered regions span residues 165–210 (YPTS…QSQS), 237–278 (LQSP…PGAP), and 302–331 (RKLP…WSRH). Residues 343 to 347 (LRELL) carry the LXXLL motif 2 motif. Disordered stretches follow at residues 369–463 (LTPR…LPWT), 520–567 (RELG…QLPP), 601–623 (TAGL…FKPD), and 636–683 (LPSP…GQKR). Phosphoserine is present on serine 384. The span at 412–422 (LRLEVKREVRR) shows a compositional bias: basic and acidic residues. A compositionally biased stretch (acidic residues) spans 429-450 (QEEEDEEEEEEEEEEEKEEEEE). Serine 524 is modified (phosphoserine). Over residues 614–623 (PTEEDPFKPD) the composition is skewed to basic and acidic residues. A Phosphoserine modification is found at serine 638. The HCFC1-binding-motif (HBM) signature appears at 691–694 (DHDY). Disordered regions lie at residues 717–758 (VHLE…LRDH) and 779–867 (DLAS…WSPA). Residues 793–805 (EDSSSSSGESSFL) are compositionally biased toward low complexity. Acidic residues predominate over residues 806–825 (PEEEEEEGEEEEEDDEEEDS). A compositionally biased stretch (low complexity) spans 849 to 866 (CSRSRSSSGSSPCHSWSP). In terms of domain architecture, RRM spans 902 to 976 (RVVYIQNLSS…RNEPSFQLSY (75 aa)).

As to quaternary structure, interacts with hepatocyte nuclear factor 4-alpha/HNF4A, Sterol regulatory binding transcription factor 1/SREBF1, PPAR-alpha/PPARA, thyroid hormone receptor beta/THRB and host cell factor/HCFC1. Interacts with estrogen-related receptor gamma/ESRRG and alpha/ESRRA. Interacts with PRDM16. Interacts with estrogen receptor alpha/ESR1. In terms of tissue distribution, ubiquitous with higher expression in heart, brain and skeletal muscle.

It localises to the nucleus. In terms of biological role, plays a role of stimulator of transcription factors and nuclear receptors activities. Activates transcriptional activity of estrogen receptor alpha, nuclear respiratory factor 1 (NRF1) and glucocorticoid receptor in the presence of glucocorticoids. May play a role in constitutive non-adrenergic-mediated mitochondrial biogenesis as suggested by increased basal oxygen consumption and mitochondrial number when overexpressed. May be involved in fat oxidation and non-oxidative glucose metabolism and in the regulation of energy expenditure. Induces the expression of PERM1 in the skeletal muscle in an ESRRA-dependent manner. In Homo sapiens (Human), this protein is Peroxisome proliferator-activated receptor gamma coactivator 1-beta (PPARGC1B).